A 154-amino-acid chain; its full sequence is Superoxide dismutase [Cu-Zn] (154 aa).

Cu cation contacts are provided by His47, His49, and His64. A disulfide bridge connects residues Cys58 and Cys147. The Zn(2+) site is built by His64, His72, His81, and Asp84. His121 provides a ligand contact to Cu cation. Over residues 124–137 (TDDLGKGENEESKK) the composition is skewed to basic and acidic residues. The tract at residues 124–144 (TDDLGKGENEESKKTGNAGTR) is disordered. Arg144 lines the substrate pocket.

The protein belongs to the Cu-Zn superoxide dismutase family. In terms of assembly, homodimer. Cu cation is required as a cofactor. The cofactor is Zn(2+).

The protein localises to the cytoplasm. It catalyses the reaction 2 superoxide + 2 H(+) = H2O2 + O2. Destroys radicals which are normally produced within the cells and which are toxic to biological systems. This is Superoxide dismutase [Cu-Zn] (sod1) from Botryotinia fuckeliana (Noble rot fungus).